A 229-amino-acid polypeptide reads, in one-letter code: Somatolactin (229 aa).

The N-terminal stretch at 1–21 is a signal peptide; the sequence is MAALQEVLLAVLLWPVLVTIS. 3 disulfides stabilise this stretch: cysteine 26–cysteine 36, cysteine 87–cysteine 203, and cysteine 220–cysteine 228. An N-linked (GlcNAc...) asparagine glycan is attached at asparagine 143.

The protein belongs to the somatotropin/prolactin family. In terms of tissue distribution, pituitary gland.

It is found in the secreted. The protein is Somatolactin of Tetraodon miurus (Congo puffer).